The sequence spans 368 residues: L-lactate oxidase (368 aa).

The region spanning 13–368 is the FMN hydroxy acid dehydrogenase domain; sequence VNAIDVLDLA…KQMKVKTTFA (356 aa). Tyr39 lines the pyruvate pocket. FMN contacts are provided by residues 92–94, Ser121, and Gln143; that span reads PIA. Tyr145 provides a ligand contact to pyruvate. Thr171 contributes to the FMN binding site. Position 180 (Arg180) interacts with pyruvate. Lys239 and Ser261 together coordinate FMN. Positions 263 and 266 each coordinate pyruvate. The active-site Proton acceptor is His263. Residues 294-298 and Arg318 contribute to the FMN site; that span reads DGGVQ.

This sequence belongs to the FMN-dependent alpha-hydroxy acid dehydrogenase family. Homotetramer. Requires FMN as cofactor.

The catalysed reaction is (S)-lactate + O2 = pyruvate + H2O2. It carries out the reaction 2-hydroxyoctanoate + O2 = 2-oxooctanoate + H2O2. Its function is as follows. Catalyzes the oxidation of (S)-lactate (L-lactate) to pyruvate, with a reduction of O2 to H2O2. To a lesser extent is also able to use 2-hydroxyoctanoate as substrate. May be involved in the utilization of L-lactate as an energy source for growth. In Lacticaseibacillus rhamnosus (strain LMS2-1), this protein is L-lactate oxidase.